The following is a 191-amino-acid chain: Large ribosomal subunit protein uL6 (191 aa).

Belongs to the universal ribosomal protein uL6 family. As to quaternary structure, part of the 50S ribosomal subunit.

In terms of biological role, this protein binds to the 23S rRNA, and is important in its secondary structure. It is located near the subunit interface in the base of the L7/L12 stalk, and near the tRNA binding site of the peptidyltransferase center. This Cyanothece sp. (strain PCC 7425 / ATCC 29141) protein is Large ribosomal subunit protein uL6.